The sequence spans 202 residues: Probable nicotinate-nucleotide adenylyltransferase (202 aa).

The protein belongs to the NadD family.

The enzyme catalyses nicotinate beta-D-ribonucleotide + ATP + H(+) = deamido-NAD(+) + diphosphate. It participates in cofactor biosynthesis; NAD(+) biosynthesis; deamido-NAD(+) from nicotinate D-ribonucleotide: step 1/1. Functionally, catalyzes the reversible adenylation of nicotinate mononucleotide (NaMN) to nicotinic acid adenine dinucleotide (NaAD). This chain is Probable nicotinate-nucleotide adenylyltransferase, found in Bacteroides thetaiotaomicron (strain ATCC 29148 / DSM 2079 / JCM 5827 / CCUG 10774 / NCTC 10582 / VPI-5482 / E50).